Reading from the N-terminus, the 166-residue chain is Ureidoglycolate lyase (166 aa).

It belongs to the ureidoglycolate lyase family. In terms of assembly, homodimer. Ni(2+) serves as cofactor.

The enzyme catalyses (S)-ureidoglycolate = urea + glyoxylate. It participates in nitrogen metabolism; (S)-allantoin degradation. Functionally, catalyzes the catabolism of the allantoin degradation intermediate (S)-ureidoglycolate, generating urea and glyoxylate. Involved in the utilization of allantoin as nitrogen source. This chain is Ureidoglycolate lyase, found in Agrobacterium fabrum (strain C58 / ATCC 33970) (Agrobacterium tumefaciens (strain C58)).